We begin with the raw amino-acid sequence, 191 residues long: Nucleoside triphosphate pyrophosphatase (191 aa).

The Proton acceptor role is filled by Asp-70.

Belongs to the Maf family. Requires a divalent metal cation as cofactor.

It localises to the cytoplasm. It carries out the reaction a ribonucleoside 5'-triphosphate + H2O = a ribonucleoside 5'-phosphate + diphosphate + H(+). The catalysed reaction is a 2'-deoxyribonucleoside 5'-triphosphate + H2O = a 2'-deoxyribonucleoside 5'-phosphate + diphosphate + H(+). Functionally, nucleoside triphosphate pyrophosphatase. May have a dual role in cell division arrest and in preventing the incorporation of modified nucleotides into cellular nucleic acids. The chain is Nucleoside triphosphate pyrophosphatase from Synechococcus sp. (strain WH7803).